The following is a 253-amino-acid chain: MLIKDTIFYRPDWRWHIFLKYLTNNLSKYNCLEKIIPSEYSYKDSTYGSKKSKKNVNLCTWGVTHKKRIQFARAVCINSPKYSVLNFLIIPNTIYNVPFFGVDFVSLPNIYLLVLDFQPSLKIQNQYNNQLLEKLIKLKNHCHSSLPLAEEMSVDVARFFSPGAIWSKLPKEERSDFLIANQLYTSFKEYLDLYLEILFESKEVNIDLQKELINGQNNYLNYRRDNDPARPMLSSLFGKEFTESLIKEVLFTT.

It belongs to the HY2 family.

The catalysed reaction is (3Z)-phycoerythrobilin + oxidized 2[4Fe-4S]-[ferredoxin] = 15,16-dihydrobiliverdin + reduced 2[4Fe-4S]-[ferredoxin] + 2 H(+). Functionally, catalyzes the two-electron reduction of the C2 and C3(1) diene system of 15,16-dihydrobiliverdin. This chain is Phycoerythrobilin:ferredoxin oxidoreductase (pebB), found in Prochlorococcus marinus (strain MIT 9215).